Consider the following 95-residue polypeptide: uncharacterized protein (95 aa).

This is an uncharacterized protein from Archaeoglobus fulgidus (strain ATCC 49558 / DSM 4304 / JCM 9628 / NBRC 100126 / VC-16).